The primary structure comprises 263 residues: Leucyl/phenylalanyl-tRNA--protein transferase (263 aa).

The protein belongs to the L/F-transferase family.

The protein resides in the cytoplasm. It carries out the reaction N-terminal L-lysyl-[protein] + L-leucyl-tRNA(Leu) = N-terminal L-leucyl-L-lysyl-[protein] + tRNA(Leu) + H(+). The enzyme catalyses N-terminal L-arginyl-[protein] + L-leucyl-tRNA(Leu) = N-terminal L-leucyl-L-arginyl-[protein] + tRNA(Leu) + H(+). The catalysed reaction is L-phenylalanyl-tRNA(Phe) + an N-terminal L-alpha-aminoacyl-[protein] = an N-terminal L-phenylalanyl-L-alpha-aminoacyl-[protein] + tRNA(Phe). In terms of biological role, functions in the N-end rule pathway of protein degradation where it conjugates Leu, Phe and, less efficiently, Met from aminoacyl-tRNAs to the N-termini of proteins containing an N-terminal arginine or lysine. This Novosphingobium aromaticivorans (strain ATCC 700278 / DSM 12444 / CCUG 56034 / CIP 105152 / NBRC 16084 / F199) protein is Leucyl/phenylalanyl-tRNA--protein transferase.